We begin with the raw amino-acid sequence, 498 residues long: MNNPKNDNYLSELSKVIWPIERYENKKFLPMAFMMFCILLNYSTLRSIKDGFVVTDIGAEAISFLKTYIVLPSAVIAMVIYVKLCDILKQENVFYVITSFFLGYFALFAFVLYPYPDLVHPDPETIESWSVAYPNVKWFIRIVGKWSFASFYTMAELWGTMMLSLLFWQFANQITKTDEAKRFYSMFGLLANLALPVTSVIIGYCLHEKTQIVAEHLKFVPLFVIMITSSFLVILTYRWMNKNVLTDPRLYDPALVKEKKAKAKMSLIDSFKMIFTSKYVGYIALLLIAYGVSVNLVEGVWKSKVKELYPTKEAYTIYMGKFQFYQGWVAIAFMLIGSNILRKVSWLTAAMITPLMMLITGAAFFAFIFFDSVIAMHLTGILASGPLALAVMIGMIQNVLSKGVKYSLFDATKNMAYIPLDKDLRVKGQAAVEVIGGRFGKSGGAIIQSTFFILFPAFGFVEATPYFASIFFVIVILWIYAVKGLNKEYKVLVNKTEK.

Topologically, residues 1 to 33 are cytoplasmic; sequence MNNPKNDNYLSELSKVIWPIERYENKKFLPMAF. Residues 34–54 traverse the membrane as a helical segment; the sequence is MMFCILLNYSTLRSIKDGFVV. Cys37 and Cys85 are disulfide-bonded. Over 55–67 the chain is Extracellular; sequence TDIGAEAISFLKT. The chain crosses the membrane as a helical span at residues 68–88; sequence YIVLPSAVIAMVIYVKLCDIL. Residues 89-92 lie on the Cytoplasmic side of the membrane; sequence KQEN. The helical transmembrane segment at 93-113 threads the bilayer; it reads VFYVITSFFLGYFALFAFVLY. The Extracellular portion of the chain corresponds to 114–147; that stretch reads PYPDLVHPDPETIESWSVAYPNVKWFIRIVGKWS. Residues 148 to 168 traverse the membrane as a helical segment; it reads FASFYTMAELWGTMMLSLLFW. Residues 169-184 lie on the Cytoplasmic side of the membrane; that stretch reads QFANQITKTDEAKRFY. A helical membrane pass occupies residues 185–205; that stretch reads SMFGLLANLALPVTSVIIGYC. Over 206–218 the chain is Extracellular; that stretch reads LHEKTQIVAEHLK. The helical transmembrane segment at 219–239 threads the bilayer; sequence FVPLFVIMITSSFLVILTYRW. Over 240–279 the chain is Cytoplasmic; the sequence is MNKNVLTDPRLYDPALVKEKKAKAKMSLIDSFKMIFTSKY. A helical membrane pass occupies residues 280 to 300; that stretch reads VGYIALLLIAYGVSVNLVEGV. At 301 to 320 the chain is on the extracellular side; sequence WKSKVKELYPTKEAYTIYMG. Residues 321 to 341 traverse the membrane as a helical segment; sequence KFQFYQGWVAIAFMLIGSNIL. The Cytoplasmic segment spans residues 342–348; it reads RKVSWLT. The helical transmembrane segment at 349 to 369 threads the bilayer; sequence AAMITPLMMLITGAAFFAFIF. The Extracellular portion of the chain corresponds to 370-379; sequence FDSVIAMHLT. The helical transmembrane segment at 380–400 threads the bilayer; that stretch reads GILASGPLALAVMIGMIQNVL. Topologically, residues 401–438 are cytoplasmic; it reads SKGVKYSLFDATKNMAYIPLDKDLRVKGQAAVEVIGGR. 436 to 442 contacts ATP; sequence GGRFGKS. The helical transmembrane segment at 439–459 threads the bilayer; the sequence is FGKSGGAIIQSTFFILFPAFG. Over 460-465 the chain is Extracellular; the sequence is FVEATP. The helical transmembrane segment at 466 to 486 threads the bilayer; that stretch reads YFASIFFVIVILWIYAVKGLN. The Cytoplasmic segment spans residues 487 to 498; sequence KEYKVLVNKTEK.

This sequence belongs to the ADP/ATP translocase tlc family.

The protein resides in the cell membrane. Its function is as follows. Provides the rickettsial cell with host ATP in exchange for rickettsial ADP. This is an obligate exchange system. This energy acquiring activity is an important component of rickettsial parasitism. The sequence is that of ADP,ATP carrier protein 1 (tlcA) from Rickettsia conorii (strain ATCC VR-613 / Malish 7).